Here is a 420-residue protein sequence, read N- to C-terminus: MAEVKVPELAESITEGTIAEWLKNVGDNVDKGEAILELETDKVNVEVVSEEAGVLSEQLAEEGDTVEVGQAVAVVGEGQVNTSNDSSNESSQKDEAKEKETPKQSNPNSSESENTQDNSQQRINATPSARRHARKNGVDLSEVSGKGNDVLRKDDVENSQKSSSQTAKSESKSQNSGSKQTNNNPSKPVIREKMSRRKKTAAKKLLEVSNQTAMLTTFNEVDMTNVMDLRKRKKEQFIKDHDGTKLGFMSFFTKAAVAALKKYPEVNAEIDGDDMITKQFYDIGIAVSTDDGLLVPFVRDCDKKNFAEIEQEIANLAVKARDKKLGLDDMVNGSFTITNGGIFGSMMSTPIINGNQAAILGMHSIITRPIAVDKDTIENRPMMYIALSYDHRIIDGKEAVGFLKTIKELIENPEDLLLES.

One can recognise a Lipoyl-binding domain in the interval 1 to 76 (MAEVKVPELA…EVGQAVAVVG (76 aa)). Lys-42 is subject to N6-lipoyllysine. The tract at residues 75–199 (VGEGQVNTSN…IREKMSRRKK (125 aa)) is disordered. A compositionally biased stretch (polar residues) spans 81 to 90 (NTSNDSSNES). The segment covering 91 to 102 (SQKDEAKEKETP) has biased composition (basic and acidic residues). Residues 103-127 (KQSNPNSSESENTQDNSQQRINATP) are compositionally biased toward polar residues. One can recognise a Peripheral subunit-binding (PSBD) domain in the interval 124–160 (NATPSARRHARKNGVDLSEVSGKGNDVLRKDDVENSQ). The span at 149 to 158 (DVLRKDDVEN) shows a compositional bias: basic and acidic residues. The span at 159-174 (SQKSSSQTAKSESKSQ) shows a compositional bias: low complexity. Polar residues predominate over residues 175-186 (NSGSKQTNNNPS). Active-site residues include His-391 and Asp-395.

This sequence belongs to the 2-oxoacid dehydrogenase family. As to quaternary structure, forms a 24-polypeptide structural core with octahedral symmetry. Part of the 2-oxoglutarate dehydrogenase (OGDH) complex composed of E1 (2-oxoglutarate dehydrogenase), E2 (dihydrolipoamide succinyltransferase) and E3 (dihydrolipoamide dehydrogenase); the complex contains multiple copies of the three enzymatic components (E1, E2 and E3). (R)-lipoate serves as cofactor.

The enzyme catalyses N(6)-[(R)-dihydrolipoyl]-L-lysyl-[protein] + succinyl-CoA = N(6)-[(R)-S(8)-succinyldihydrolipoyl]-L-lysyl-[protein] + CoA. The protein operates within amino-acid degradation; L-lysine degradation via saccharopine pathway; glutaryl-CoA from L-lysine: step 6/6. Its function is as follows. E2 component of the 2-oxoglutarate dehydrogenase (OGDH) complex which catalyzes the second step in the conversion of 2-oxoglutarate to succinyl-CoA and CO(2). The sequence is that of Dihydrolipoyllysine-residue succinyltransferase component of 2-oxoglutarate dehydrogenase complex (odhB) from Staphylococcus epidermidis (strain ATCC 35984 / DSM 28319 / BCRC 17069 / CCUG 31568 / BM 3577 / RP62A).